We begin with the raw amino-acid sequence, 411 residues long: MSLRLFSSESVTEGHPDKICDAISDKILDALIAKDPEARVAVETVVTTGLVHVVGEIRTTTYVEIPALVRKTLLEIGFNSSDMGFDGSTCGVSVAIGEQSQEIAQGVDTALEHRSHDAEGGAELDEIDRLGAGDQGLMFGYATNETPEYMPLPIALAHRLSRRLTEVRKKGIVPHLRPDGKTQVTFAYDAEGAPVRLDTVVVSTQHDAGIEQEWLHEQIRTHVVQHVLDEAGLSGNLADTDYTLLVNPSGSFVLGGPMGDAGLTGRKIIVDTYGGMARHGGGAFSGKDPSKVDRSGAYAMRWVAKNIVAAGLADRAEVQVAYAIGRATPVGLYVETFGTEKAPVEAIQAAVRQVFDLRPAAILQELDLKRPIYAQTSAYGHFGRTDLDLPWERTDRVEALQKAVAAAQQSQ.

His15 provides a ligand contact to ATP. Asp17 serves as a coordination point for Mg(2+). Residue Glu43 coordinates K(+). Glu56 and Gln99 together coordinate L-methionine. The interval Gln99–Thr109 is flexible loop. ATP contacts are provided by residues Asp179 to Lys181, Asp260, Arg266 to Lys267, Ala283, and Lys287. Asp260 lines the L-methionine pocket. Lys291 contributes to the L-methionine binding site.

The protein belongs to the AdoMet synthase family. As to quaternary structure, homotetramer; dimer of dimers. It depends on Mg(2+) as a cofactor. Requires K(+) as cofactor.

The protein resides in the cytoplasm. It carries out the reaction L-methionine + ATP + H2O = S-adenosyl-L-methionine + phosphate + diphosphate. It functions in the pathway amino-acid biosynthesis; S-adenosyl-L-methionine biosynthesis; S-adenosyl-L-methionine from L-methionine: step 1/1. In terms of biological role, catalyzes the formation of S-adenosylmethionine (AdoMet) from methionine and ATP. The overall synthetic reaction is composed of two sequential steps, AdoMet formation and the subsequent tripolyphosphate hydrolysis which occurs prior to release of AdoMet from the enzyme. This chain is S-adenosylmethionine synthase, found in Corynebacterium jeikeium (strain K411).